The following is a 179-amino-acid chain: MLRFKELYQQKIIENLQKNFSYKNKHEIPQIKKIVINMGVGEATADSKVINNAVNDLTLISGQKPVVTLARKSIATFKLRENMKIGCKVTLRKDRMYDFLERLVIVALPRVKEFRGFSYKSFDGKGNFTFGLKEQIVFPEINYDKIDTIRGMDITIVTSAKTDQESKFLLSGFNLPFYN.

Belongs to the universal ribosomal protein uL5 family. As to quaternary structure, part of the 50S ribosomal subunit; part of the 5S rRNA/L5/L18/L25 subcomplex. Contacts the 5S rRNA and the P site tRNA. Forms a bridge to the 30S subunit in the 70S ribosome.

Its function is as follows. This is one of the proteins that bind and probably mediate the attachment of the 5S RNA into the large ribosomal subunit, where it forms part of the central protuberance. In the 70S ribosome it contacts protein S13 of the 30S subunit (bridge B1b), connecting the 2 subunits; this bridge is implicated in subunit movement. Contacts the P site tRNA; the 5S rRNA and some of its associated proteins might help stabilize positioning of ribosome-bound tRNAs. The chain is Large ribosomal subunit protein uL5 from Rickettsia peacockii (strain Rustic).